Consider the following 248-residue polypeptide: Malonyl-[acyl-carrier protein] O-methyltransferase 2 (248 aa).

Belongs to the methyltransferase superfamily.

It catalyses the reaction malonyl-[ACP] + S-adenosyl-L-methionine = malonyl-[ACP] methyl ester + S-adenosyl-L-homocysteine. It participates in cofactor biosynthesis; biotin biosynthesis. Converts the free carboxyl group of a malonyl-thioester to its methyl ester by transfer of a methyl group from S-adenosyl-L-methionine (SAM). It allows to synthesize pimeloyl-ACP via the fatty acid synthetic pathway. The chain is Malonyl-[acyl-carrier protein] O-methyltransferase 2 from Coxiella burnetii (strain RSA 493 / Nine Mile phase I).